A 169-amino-acid polypeptide reads, in one-letter code: Protein pid-1 (169 aa).

Residues 137-151 (SGSPRITPQKHTPVS) show a composition bias toward polar residues. The tract at residues 137–169 (SGSPRITPQKHTPVSANHKPARSIFDDIPSNIA) is disordered.

In terms of assembly, component of the pid-1 variant of the PETISCO complex (also called the pid-3, erh-2, tofu-6, and ife-3 small RNA complex) containing at least pid-1, tofu-6, ife-3, pid-3, and erh-2, which is required for the biogenesis of a class of 21 nucleotide PIWI-interacting RNAs (piRNAs) that possess a uracil residue at the 5'-end (also called 21U-RNAs). Within the complex interacts with pid-3; the interaction is direct. Within the complex interacts with erh-2. Within the complex interacts with tofu-6. As to expression, expressed predominantly in the germline (at protein level).

It is found in the cytoplasm. It localises to the nucleus. The protein localises to the perinuclear region. Component of the pid-1 variant of the PETISCO complex which is required for the biogenesis of a class of 21 nucleotide PIWI-interacting RNAs (piRNAs) that possess a uracil residue at the 5'-end (also called 21U-RNAs). Within the complex acts as an adapter which binds to the complex via erh-2. Involved in the biogenesis of 21U-RNAs which guide the piwi protein prg-1 to its DNA targets for silencing. Plays a role in small RNA-directed transgenerational epigenetic inheritance. This is Protein pid-1 from Caenorhabditis elegans.